The following is a 396-amino-acid chain: Na(+)/H(+) antiporter NhaA (396 aa).

Transmembrane regions (helical) follow at residues 14–34 (ASGI…NSGL), 59–79 (LLLW…GLEV), 95–115 (TFPA…YTFF), 124–144 (AGWA…MALL), 154–174 (VFLL…IALF), 178–198 (QLSL…LWMN), 205–225 (IGLY…SGVH), 254–274 (ALHP…NAGV), 278–298 (GIGL…GLFV), 328–348 (IFAV…IASL), and 363–383 (LGIL…LRMS).

It belongs to the NhaA Na(+)/H(+) (TC 2.A.33) antiporter family.

The protein localises to the cell inner membrane. It catalyses the reaction Na(+)(in) + 2 H(+)(out) = Na(+)(out) + 2 H(+)(in). In terms of biological role, na(+)/H(+) antiporter that extrudes sodium in exchange for external protons. This is Na(+)/H(+) antiporter NhaA from Aeromonas salmonicida (strain A449).